The primary structure comprises 417 residues: D-amino acid dehydrogenase (417 aa).

FAD is bound at residue 3–17; sequence AVVLGSGVVGLMSAW.

This sequence belongs to the DadA oxidoreductase family. It depends on FAD as a cofactor.

The catalysed reaction is a D-alpha-amino acid + A + H2O = a 2-oxocarboxylate + AH2 + NH4(+). Oxidative deamination of D-amino acids. This Vibrio vulnificus (strain CMCP6) protein is D-amino acid dehydrogenase.